The chain runs to 689 residues: Beta-adrenergic receptor kinase 1 (689 aa).

The segment at 1 to 190 (MADLEAVLAD…ELNIHLTMND (190 aa)) is N-terminal. The region spanning 54–175 (TFEKIFSQKL…IESDKFTRFC (122 aa)) is the RGS domain. Residues 191-453 (FSVHRIIGRG…AQEVKESPFF (263 aa)) enclose the Protein kinase domain. ATP-binding positions include 197–205 (IGRGGFGEV) and K220. D317 functions as the Proton acceptor in the catalytic mechanism. The 68-residue stretch at 454 to 521 (RSLDWQMVFL…TISERWQQEV (68 aa)) folds into the AGC-kinase C-terminal domain. One can recognise a PH domain in the interval 558–652 (DCIMHGYMSK…WKKELRDAYR (95 aa)). Position 670 is a phosphoserine (S670).

This sequence belongs to the protein kinase superfamily. AGC Ser/Thr protein kinase family. GPRK subfamily. As to quaternary structure, interacts with the heterodimer formed by GNB1 and GNG2. Interacts with GIT1. Interacts with, and phosphorylates chemokine-stimulated CCR5. Interacts with ARRB1. Interacts with LPAR1 and LPAR2. Interacts with RALA in response to LPAR1 activation. ADRBK1 and RALA mutually inhibit each other's binding to LPAR1. Interacts with ADRB2. In terms of tissue distribution, expressed in peripheral blood leukocytes.

Its subcellular location is the cytoplasm. It localises to the cell membrane. The protein resides in the postsynapse. The protein localises to the presynapse. It carries out the reaction [beta-adrenergic receptor] + ATP = [beta-adrenergic receptor]-phosphate + ADP + H(+). Its activity is regulated as follows. In contrast to other AGC family kinases, the catalytic activity is solely regulated by the binding of substrates and ligands, not by phosphorylation of the kinase domain. Specifically phosphorylates the agonist-occupied form of the beta-adrenergic and closely related receptors, probably inducing a desensitization of them. Key regulator of LPAR1 signaling. Competes with RALA for binding to LPAR1 thus affecting the signaling properties of the receptor. Desensitizes LPAR1 and LPAR2 in a phosphorylation-independent manner. Positively regulates ciliary smoothened (SMO)-dependent Hedgehog (Hh) signaling pathway by facilitating the trafficking of SMO into the cilium and the stimulation of SMO activity. Inhibits relaxation of airway smooth muscle in response to blue light. This is Beta-adrenergic receptor kinase 1 from Homo sapiens (Human).